A 221-amino-acid chain; its full sequence is Ribosomal RNA small subunit methyltransferase G 3 (221 aa).

S-adenosyl-L-methionine contacts are provided by residues G85, F90, 136-137 (IE), and R150.

It belongs to the methyltransferase superfamily. RNA methyltransferase RsmG family.

The protein localises to the cytoplasm. It carries out the reaction guanosine(527) in 16S rRNA + S-adenosyl-L-methionine = N(7)-methylguanosine(527) in 16S rRNA + S-adenosyl-L-homocysteine. Functionally, specifically methylates the N7 position of guanine in position 527 of 16S rRNA. This chain is Ribosomal RNA small subunit methyltransferase G 3, found in Bdellovibrio bacteriovorus (strain ATCC 15356 / DSM 50701 / NCIMB 9529 / HD100).